The sequence spans 328 residues: Porphobilinogen deaminase (328 aa).

An S-(dipyrrolylmethanemethyl)cysteine modification is found at Cys245.

It belongs to the HMBS family. As to quaternary structure, monomer. Dipyrromethane serves as cofactor.

It carries out the reaction 4 porphobilinogen + H2O = hydroxymethylbilane + 4 NH4(+). It functions in the pathway porphyrin-containing compound metabolism; protoporphyrin-IX biosynthesis; coproporphyrinogen-III from 5-aminolevulinate: step 2/4. The protein operates within porphyrin-containing compound metabolism; chlorophyll biosynthesis. In terms of biological role, tetrapolymerization of the monopyrrole PBG into the hydroxymethylbilane pre-uroporphyrinogen in several discrete steps. In Gloeobacter violaceus (strain ATCC 29082 / PCC 7421), this protein is Porphobilinogen deaminase.